The sequence spans 221 residues: NAD(P)H-hydrate epimerase (221 aa).

The YjeF N-terminal domain maps to 9-219; the sequence is MRELETAAVK…NIGLPKELLS (211 aa). 60-64 is a binding site for (6S)-NADPHX; the sequence is GNGGD. Residues Asn61 and Asp131 each coordinate K(+). (6S)-NADPHX-binding positions include 135–141, Tyr146, and Asp164; that span reads GIGFKGE. Ser167 contributes to the K(+) binding site.

Belongs to the NnrE/AIBP family. Requires K(+) as cofactor.

It carries out the reaction (6R)-NADHX = (6S)-NADHX. The enzyme catalyses (6R)-NADPHX = (6S)-NADPHX. Functionally, catalyzes the epimerization of the S- and R-forms of NAD(P)HX, a damaged form of NAD(P)H that is a result of enzymatic or heat-dependent hydration. This is a prerequisite for the S-specific NAD(P)H-hydrate dehydratase to allow the repair of both epimers of NAD(P)HX. The chain is NAD(P)H-hydrate epimerase from Elusimicrobium minutum (strain Pei191).